Consider the following 131-residue polypeptide: Protein NEGATIVE REGULATOR OF RESISTANCE (131 aa).

Disordered stretches follow at residues 1–33 and 51–131; these read MDATTTDATTAKRKRPAASDIADDAPTTVDEVS and TRRL…RAPA. A Nuclear localization signal motif is present at residues 12-15; it reads KRKR. A compositionally biased stretch (low complexity) spans 116-131; the sequence is PPSDAPATPRSARAPA.

The protein belongs to the NPR1-interactor family. In terms of assembly, interacts with NPR1/NH1. Interacts with NPR2/NH2.

It is found in the nucleus. Its function is as follows. Acts as a negative regulator of disease resistance. Acts on basal resistance, age-related resistance and resistance mediated by the LRR receptor kinase XA21. Plants over-expressing NRR display enhanced susceptibility to the bacterial blight Xanthomonas oryzae pv. oryzae (Xoo). This is Protein NEGATIVE REGULATOR OF RESISTANCE from Oryza sativa subsp. indica (Rice).